The chain runs to 318 residues: MYFINILTLLIPILIAMAFLTLVERKILGYMQLRKGPNIVGPYGILQPFADAMKLFMKEPMRPLTTSMSLFIIAPTLSLTLALSLWIPLPMPHPLINLNLGMLFILATSSLSVYSILWSGWASNSKYSLFGALRAVAQTISYEVTMAIILLSVLLMSGSFSLQMLITTQEHIWLLIPAWPMAMMWYISTLAETNRAPFDLTEGESELVSGFNVEYAAGPFALFFMAEYTNIILMNALTSIVFLGPLYHINYPELYSTSFMTETLLLSTTFLWIRASYPRFRYDQLMHLLWKNFLPLTLAFCMWYISLPIFLAGIPPYT.

8 consecutive transmembrane segments (helical) span residues 3–23 (FINI…LTLV), 70–90 (LFII…IPLP), 100–120 (LGML…LWSG), 146–166 (MAII…QMLI), 171–191 (HIWL…STLA), 231–251 (IILM…HINY), 254–273 (LYST…FLWI), and 294–314 (LPLT…LAGI).

Belongs to the complex I subunit 1 family. As to quaternary structure, core subunit of respiratory chain NADH dehydrogenase (Complex I) which is composed of 45 different subunits.

Its subcellular location is the mitochondrion inner membrane. It carries out the reaction a ubiquinone + NADH + 5 H(+)(in) = a ubiquinol + NAD(+) + 4 H(+)(out). In terms of biological role, core subunit of the mitochondrial membrane respiratory chain NADH dehydrogenase (Complex I) which catalyzes electron transfer from NADH through the respiratory chain, using ubiquinone as an electron acceptor. Essential for the catalytic activity and assembly of complex I. The chain is NADH-ubiquinone oxidoreductase chain 1 from Rattus norvegicus (Rat).